Consider the following 101-residue polypeptide: RNA-binding protein Hfq (101 aa).

The 60-residue stretch at 9–68 (DPYLNALRRERIPVSIYLVNGIKLQGQIESFDQFIILLKNTVSQMVYKHAISTVVPARSI) folds into the Sm domain. The disordered stretch occupies residues 68–91 (ISHNNNGSSQAQAPQQAVQTTQPV). Residues 77–91 (QAQAPQQAVQTTQPV) show a composition bias toward low complexity.

Belongs to the Hfq family. In terms of assembly, homohexamer.

Functionally, RNA chaperone that binds small regulatory RNA (sRNAs) and mRNAs to facilitate mRNA translational regulation in response to envelope stress, environmental stress and changes in metabolite concentrations. Also binds with high specificity to tRNAs. The protein is RNA-binding protein Hfq of Haemophilus ducreyi (strain 35000HP / ATCC 700724).